The chain runs to 447 residues: Probable rhamnogalacturonase C (447 aa).

The signal sequence occupies residues Met-1 to Ala-19. N-linked (GlcNAc...) asparagine glycosylation is found at Asn-37 and Asn-65. A disulfide bridge links Cys-40 with Cys-66. The Proton donor role is filled by Asp-217. A disulfide bridge links Cys-219 with Cys-236. N-linked (GlcNAc...) asparagine glycosylation is found at Asn-237 and Asn-252. The active site involves His-291. Residue Asn-316 is glycosylated (N-linked (GlcNAc...) asparagine). 2 cysteine pairs are disulfide-bonded: Cys-338-Cys-344 and Cys-366-Cys-375.

The protein belongs to the glycosyl hydrolase 28 family.

It localises to the secreted. In terms of biological role, pectinolytic enzymes consist of four classes of enzymes: pectine lyase, polygalacturonase, pectin methylesterase and rhamnogalacturonase. Hydrolyzes alpha-D-galacturonopyranosyl-(1,2)-alpha-L-rhamnopyranosyl linkages in the backbone of the hairy regions of pectins. In Aspergillus flavus (strain ATCC 200026 / FGSC A1120 / IAM 13836 / NRRL 3357 / JCM 12722 / SRRC 167), this protein is Probable rhamnogalacturonase C (rhgC).